A 148-amino-acid chain; its full sequence is UPF0756 membrane protein ESA_02180 (148 aa).

4 consecutive transmembrane segments (helical) span residues 4 to 24, 51 to 71, 86 to 106, and 112 to 132; these read ITLL…NMAV, VTVG…SGTL, LVAI…VALM, and IVAG…GVPV.

This sequence belongs to the UPF0756 family.

It localises to the cell membrane. The protein is UPF0756 membrane protein ESA_02180 of Cronobacter sakazakii (strain ATCC BAA-894) (Enterobacter sakazakii).